The chain runs to 301 residues: Protein p34 (301 aa).

A run of 5 helical transmembrane segments spans residues 15–35, 40–60, 83–103, 120–140, and 171–191; these read YLSV…WVVT, ILAA…NLIA, TIFS…FSSV, TVMY…TYVI, and LSDY…LYIF.

This sequence belongs to the cation diffusion facilitator (CDF) transporter (TC 2.A.4) family.

The protein localises to the cell membrane. This Rickettsia rickettsii (strain Sheila Smith) protein is Protein p34 (p34).